The following is a 232-amino-acid chain: Phosphatidylserine decarboxylase proenzyme (232 aa).

The active-site Schiff-base intermediate with substrate; via pyruvic acid is the Ser-190. At Ser-190 the chain carries Pyruvic acid (Ser); by autocatalysis.

Belongs to the phosphatidylserine decarboxylase family. PSD-A subfamily. In terms of assembly, heterodimer of a large membrane-associated beta subunit and a small pyruvoyl-containing alpha subunit. It depends on pyruvate as a cofactor. Post-translationally, is synthesized initially as an inactive proenzyme. Formation of the active enzyme involves a self-maturation process in which the active site pyruvoyl group is generated from an internal serine residue via an autocatalytic post-translational modification. Two non-identical subunits are generated from the proenzyme in this reaction, and the pyruvate is formed at the N-terminus of the alpha chain, which is derived from the carboxyl end of the proenzyme. The post-translation cleavage follows an unusual pathway, termed non-hydrolytic serinolysis, in which the side chain hydroxyl group of the serine supplies its oxygen atom to form the C-terminus of the beta chain, while the remainder of the serine residue undergoes an oxidative deamination to produce ammonia and the pyruvoyl prosthetic group on the alpha chain.

The protein resides in the cell membrane. It catalyses the reaction a 1,2-diacyl-sn-glycero-3-phospho-L-serine + H(+) = a 1,2-diacyl-sn-glycero-3-phosphoethanolamine + CO2. It participates in phospholipid metabolism; phosphatidylethanolamine biosynthesis; phosphatidylethanolamine from CDP-diacylglycerol: step 2/2. Its function is as follows. Catalyzes the formation of phosphatidylethanolamine (PtdEtn) from phosphatidylserine (PtdSer). The chain is Phosphatidylserine decarboxylase proenzyme from Brucella abortus (strain S19).